Consider the following 280-residue polypeptide: Fe-S cluster assembly protein DRE2 (280 aa).

Residues 1 to 121 (MSNLLVFDNS…TTLLKKSGGG (121 aa)) form an N-terminal SAM-like domain region. Residues 122–176 (PKKFAFKRASPATAAPSTNGTNPAATVNLNSVVTLSMDDDDLMDEDDLMEDDTNL) are linker. Cys-186, Cys-198, Cys-201, and Cys-203 together coordinate [2Fe-2S] cluster. Residues 186-203 (CDPGPGKKRRKACKDCTC) are fe-S binding site A. [4Fe-4S] cluster contacts are provided by Cys-244, Cys-247, Cys-255, and Cys-258. 2 short sequence motifs (cx2C motif) span residues 244–247 (CGSC) and 255–258 (CDGC). The interval 244-258 (CGSCALGDAFRCDGC) is fe-S binding site B.

It belongs to the anamorsin family. Monomer. Interacts with TAH18. Interacts with MIA40. [2Fe-2S] cluster is required as a cofactor. Requires [4Fe-4S] cluster as cofactor.

It is found in the cytoplasm. It localises to the mitochondrion intermembrane space. In terms of biological role, component of the cytosolic iron-sulfur (Fe-S) protein assembly (CIA) machinery required for the maturation of extramitochondrial Fe-S proteins. Part of an electron transfer chain functioning in an early step of cytosolic Fe-S biogenesis, facilitating the de novo assembly of a [4Fe-4S] cluster on the scaffold complex CFD1-NBP35. Electrons are transferred to DRE2 from NADPH via the FAD- and FMN-containing protein TAH18. TAH18-DRE2 are also required for the assembly of the diferric tyrosyl radical cofactor of ribonucleotide reductase (RNR), probably by providing electrons for reduction during radical cofactor maturation in the catalytic small subunit RNR2. In Yarrowia lipolytica (strain CLIB 122 / E 150) (Yeast), this protein is Fe-S cluster assembly protein DRE2.